Consider the following 395-residue polypeptide: MSLVDLGKKLLEAARAGQDDEVRILMANGAPFTTDWLGTSPLHLAAQYGHYSTTEVLLRAGVSRDARTKVDRTPLHMAASEGHASIVEVLLKHGADVNAKDMLKMTALHWATEHNHQEVVELLIKYGADVHTQSKFCKTAFDISIDNGNEDLAEILQIAMQNQINTNPESPDTVTIHAATPQFIIGPGGVVNLTGLVSSENSSKATDETGVSAVQFGNSSTSVLATLAALAEASAPLSNSSETPVVATEEVVTAESVDGAIQQVVSSGGQQVITIVTDGIQLGNLHSIPTSGIGQPIIVTMPDGQQVLTVPATDIAEETVISEEPPAKRQCIEIIENRVESAEIEEREALQKQLDEANREAQKYRQQLLKKEQEAEAYRQKLEAMTRLQTNKEAV.

N-acetylserine is present on Ser2. ANK repeat units follow at residues 5 to 34 (DLGK…PFTT) and 37 to 66 (LGTS…SRDA). Lys69 is subject to N6-acetyllysine. 3 ANK repeats span residues 70–99 (VDRT…DVNA), 103–132 (LKMT…DVHT), and 136–166 (FCKT…QINT). The segment at 258 to 327 (DGAIQQVVSS…ETVISEEPPA (70 aa)) is transcription activation and HCFC1 interaction. Residues Lys352 and Lys381 each carry the N6-acetyllysine modification.

As to quaternary structure, heterotetramer of two alpha and two beta subunits. Interacts with HCFC1, causing repression of transcriptional activity. Acetylated by EP300/p300. Deacetylated by SIRT7, promoting heterotetramerization and activity.

The protein resides in the nucleus. Its function is as follows. Transcription factor capable of interacting with purine rich repeats (GA repeats). Acts as a master regulator of nuclear-encoded mitochondrial genes. (Microbial infection) Necessary for the expression of the Adenovirus E4 gene. The chain is GA-binding protein subunit beta-1 (GABPB1) from Homo sapiens (Human).